The primary structure comprises 211 residues: Ribosomal RNA small subunit methyltransferase G (211 aa).

S-adenosyl-L-methionine contacts are provided by residues G72, F77, I125 to E126, and R141.

This sequence belongs to the methyltransferase superfamily. RNA methyltransferase RsmG family.

The protein resides in the cytoplasm. The enzyme catalyses guanosine(527) in 16S rRNA + S-adenosyl-L-methionine = N(7)-methylguanosine(527) in 16S rRNA + S-adenosyl-L-homocysteine. Its function is as follows. Specifically methylates the N7 position of guanine in position 527 of 16S rRNA. This is Ribosomal RNA small subunit methyltransferase G from Allorhizobium ampelinum (strain ATCC BAA-846 / DSM 112012 / S4) (Agrobacterium vitis (strain S4)).